The sequence spans 412 residues: cAMP-dependent protein kinase regulatory subunit (412 aa).

The dimerization and phosphorylation stretch occupies residues 1–142; it reads MSFEEVYEEL…RLKRSVAGNF (142 aa). Positions 101-105 match the Pseudophosphorylation motif motif; it reads RRQSV. The residue at position 104 (Ser104) is a Phosphoserine. Residues 143-277, Glu224, Arg233, 278-412, Glu344, and Arg353 each bind 3',5'-cyclic AMP; these read LFKN…EEVP and ILSS…STKA. The interval 392–412 is disordered; that stretch reads MGMDNEYGDQSLHRSPPSTKA.

This sequence belongs to the cAMP-dependent kinase regulatory chain family. In terms of assembly, tetramer, composed of 2 regulatory (R) and 2 catalytic (C) subunits. In the presence of cAMP it dissociates into 2 active monomeric C subunits and an R dimer.

The protein is cAMP-dependent protein kinase regulatory subunit (cgs1) of Schizosaccharomyces pombe (strain 972 / ATCC 24843) (Fission yeast).